A 35-amino-acid polypeptide reads, in one-letter code: Antimicrobial peptide 3 (35 aa).

A Chitin-binding type-1 domain is found at 4–35; sequence GGECGGRFGGCAGGQCCSRFGFCGSGPKYCAH. 3 disulfides stabilise this stretch: cysteine 7/cysteine 20, cysteine 14/cysteine 26, and cysteine 19/cysteine 33.

Contains 3 disulfide bonds. Expressed in leaf, flower, stem and seed with highest expression in leaf (at protein level).

Functionally, has antifungal activity against A.niger (IC(50)=5.4 uM), B.sorokiniana (IC(50)=2.0 uM), B.cinerea (IC(50)=1.6 uM), F.solani (IC(50)=3.7 uM) and A.alternata (IC(50)=5.0 uM). Binds chitin in vitro. Has no antibacterial activity at concentrations up to 10 uM. The sequence is that of Antimicrobial peptide 3 from Stellaria media (Common chickweed).